The sequence spans 110 residues: UPF0122 protein RBAM_015800 (110 aa).

The protein belongs to the UPF0122 family.

Its function is as follows. Might take part in the signal recognition particle (SRP) pathway. This is inferred from the conservation of its genetic proximity to ftsY/ffh. May be a regulatory protein. The polypeptide is UPF0122 protein RBAM_015800 (Bacillus velezensis (strain DSM 23117 / BGSC 10A6 / LMG 26770 / FZB42) (Bacillus amyloliquefaciens subsp. plantarum)).